We begin with the raw amino-acid sequence, 320 residues long: Cytochrome f (320 aa).

Residues 1–35 (MQTRNTFSWIREEITRSISVLLMIYIITWASISSA) form the signal peptide. Heme contacts are provided by Tyr-36, Cys-56, Cys-59, and His-60. A helical membrane pass occupies residues 286–306 (VQGLLFFLGSVVLAQIFLVLK).

Belongs to the cytochrome f family. In terms of assembly, the 4 large subunits of the cytochrome b6-f complex are cytochrome b6, subunit IV (17 kDa polypeptide, petD), cytochrome f and the Rieske protein, while the 4 small subunits are PetG, PetL, PetM and PetN. The complex functions as a dimer. The cofactor is heme.

The protein resides in the plastid. It is found in the chloroplast thylakoid membrane. Its function is as follows. Component of the cytochrome b6-f complex, which mediates electron transfer between photosystem II (PSII) and photosystem I (PSI), cyclic electron flow around PSI, and state transitions. This is Cytochrome f from Lobularia maritima (Sweet alyssum).